The chain runs to 119 residues: Large ribosomal subunit protein bL20 (119 aa).

The protein belongs to the bacterial ribosomal protein bL20 family.

Binds directly to 23S ribosomal RNA and is necessary for the in vitro assembly process of the 50S ribosomal subunit. It is not involved in the protein synthesizing functions of that subunit. This is Large ribosomal subunit protein bL20 from Acidovorax ebreus (strain TPSY) (Diaphorobacter sp. (strain TPSY)).